A 244-amino-acid chain; its full sequence is tRNA uridine(34) hydroxylase (244 aa).

The Rhodanese domain occupies 129–219 (QGRELVMLDT…GILKYFEETD (91 aa)). The Cysteine persulfide intermediate role is filled by Cys-183.

The protein belongs to the TrhO family.

The enzyme catalyses uridine(34) in tRNA + AH2 + O2 = 5-hydroxyuridine(34) in tRNA + A + H2O. Its function is as follows. Catalyzes oxygen-dependent 5-hydroxyuridine (ho5U) modification at position 34 in tRNAs. The polypeptide is tRNA uridine(34) hydroxylase (Bordetella bronchiseptica (strain ATCC BAA-588 / NCTC 13252 / RB50) (Alcaligenes bronchisepticus)).